The following is a 532-amino-acid chain: Glutamate--cysteine ligase (532 aa).

This sequence belongs to the glutamate--cysteine ligase type 1 family. Type 1 subfamily.

It catalyses the reaction L-cysteine + L-glutamate + ATP = gamma-L-glutamyl-L-cysteine + ADP + phosphate + H(+). It participates in sulfur metabolism; glutathione biosynthesis; glutathione from L-cysteine and L-glutamate: step 1/2. In Pseudomonas fluorescens (strain Pf0-1), this protein is Glutamate--cysteine ligase.